A 722-amino-acid polypeptide reads, in one-letter code: Polyribonucleotide nucleotidyltransferase (722 aa).

2 residues coordinate Mg(2+): D486 and D492. The region spanning 553 to 612 (PRITTIQIRPEFIKNVIGPGGKVIKDIIARTGAAINIEDSGRVDIASANGEAVKAAIAMI) is the KH domain. One can recognise an S1 motif domain in the interval 622–690 (GKIYTGTVRK…KTGKIRLSRK (69 aa)). The tract at residues 696-722 (RAAQQGAAAGEAAAQPAPAPTQPDAKA) is disordered.

It belongs to the polyribonucleotide nucleotidyltransferase family. Mg(2+) is required as a cofactor.

The protein localises to the cytoplasm. It carries out the reaction RNA(n+1) + phosphate = RNA(n) + a ribonucleoside 5'-diphosphate. Its function is as follows. Involved in mRNA degradation. Catalyzes the phosphorolysis of single-stranded polyribonucleotides processively in the 3'- to 5'-direction. This chain is Polyribonucleotide nucleotidyltransferase, found in Myxococcus xanthus (strain DK1622).